The chain runs to 376 residues: MGDRERNKKRLLELLQAAGTGNGHCADCGAADPDWASYKLGVFICLHCSGVHRNFPDISKVKSVRLDFWDDSMVEFMTHNGNLSVKAKFEARVPTFYYVPQASDCLVLKEQWIRAKYERQEFMAEKAVSPPGDREGFLWKRGRDNSQFLRRRFVLLSREGLLKYYTKEEGKTPKAIINIKDLNATFQTEKIGHPHGLQITYRKEGQTRNLFVYHDSGKEIVDWFNALRAARLQYLKLAFPDLPESELVPLITRNYLKQGFMEKTGPKHREPFKKRWFALDPQERRLLYYKNPLDAFEQGQVFLGSNEQGYEVWEGLPQGIRGNRWKVGLTVITPERKFVFTCPTEKEQREWLESLRGVLSSPLSPLHLLTTSAKSG.

Residues 9–130 (KRLLELLQAA…EFMAEKAVSP (122 aa)) enclose the Arf-GAP domain. The C4-type zinc-finger motif lies at 25-48 (CADCGAADPDWASYKLGVFICLHC). 2 PH domains span residues 131–232 (PGDR…AARL) and 254–360 (NYLK…GVLS).

Expressed in many tissues, with highest levels in fat, heart and skeletal muscle. Also detected in kidney, liver and lung.

The protein localises to the cytoplasm. It localises to the cell membrane. In terms of biological role, GTPase-activating protein for the ADP ribosylation factor family (Potential). Binds phosphatidylinositol 4,5-bisphosphate, phosphatidylinositol 3,4,5-trisphosphate (PtdInsP3) and inositol 1,3,4,5-tetrakisphosphate (InsP4). Binding of phosphatidylinositol 3,5-bisphosphate and phosphatidylinositol 3,4-bisphosphate occurs at a much lower affinity. Possesses a stoichiometry of two binding sites for InsP4 with identical affinity. The protein is Arf-GAP with dual PH domain-containing protein 2 (Adap2) of Rattus norvegicus (Rat).